Consider the following 467-residue polypeptide: MAATPVRTRFAPSPTGYLHIGGARTALFSWAYARRHGGRFILRIEDTDVARSTPEAVQAILDGMKWLGLEHDEGPFYQMQRMDRYKEVIQQMLAAGTAYYCYTSKEELDALRAEQEAKKEKPRYDGRWRPAPGKTLPTPPAGVQPVVRFCNPTTGVVAWDDLVKGRIEISNTELDDFIIARADGTPTYNFCVVVDDWDMGITQVIRGDDHVNNTPRQINVLQALGASVPQYAHLSMILGDDGTKLSKRHGAVSVMQYDDEGYLPEAVINYLARLGWSHGDDEIFSREQFVEWFDLDHITPSAAQFNTEKLNWLNAHYIKQADNAYLAAEVANRLARRGVDPEAGPALEQVVALYKDRSANLNELADAAELFCVDVHAAPEVIAQHLTDTARAALASLRARFEAVAWDKAALNQAIKDTMAEHGLKMPQVAIPLRVALLGVPQTPSIDAVVEVLGRERVLARLARHLG.

The short motif at 12–22 is the 'HIGH' region element; it reads PSPTGYLHIGG. A compositionally biased stretch (basic and acidic residues) spans 114 to 128; that stretch reads EQEAKKEKPRYDGRW. The tract at residues 114-140 is disordered; the sequence is EQEAKKEKPRYDGRWRPAPGKTLPTPP. A 'KMSKS' region motif is present at residues 244 to 248; sequence KLSKR. Residue K247 coordinates ATP.

The protein belongs to the class-I aminoacyl-tRNA synthetase family. Glutamate--tRNA ligase type 1 subfamily. As to quaternary structure, monomer.

Its subcellular location is the cytoplasm. The catalysed reaction is tRNA(Glu) + L-glutamate + ATP = L-glutamyl-tRNA(Glu) + AMP + diphosphate. Functionally, catalyzes the attachment of glutamate to tRNA(Glu) in a two-step reaction: glutamate is first activated by ATP to form Glu-AMP and then transferred to the acceptor end of tRNA(Glu). The chain is Glutamate--tRNA ligase from Azoarcus sp. (strain BH72).